A 678-amino-acid polypeptide reads, in one-letter code: Platelet endothelial cell adhesion molecule (678 aa).

Positions 1–17 are cleaved as a signal peptide; it reads MLLALLLTMLLYASLQA. The Extracellular segment spans residues 18–589; the sequence is QENSFTINSI…VRVFLAPWKK (572 aa). Ig-like C2-type domains lie at 40–126, 135–213, 225–309, 315–391, 413–472, and 488–577; these read GQKL…PEVT, GGIV…FIRS, PKFQ…ILVN, PRPK…LVPV, GQII…NCHS, and PVDE…RSGP. Cys47 and Cys99 are disulfide-bonded. 2 N-linked (GlcNAc...) asparagine glycosylation sites follow: Asn74 and Asn141. 2 cysteine pairs are disulfide-bonded: Cys142–Cys195 and Cys245–Cys293. Asn309, Asn345, Asn360, Asn424, and Asn540 each carry an N-linked (GlcNAc...) asparagine glycan. 3 cysteine pairs are disulfide-bonded: Cys336–Cys375, Cys420–Cys465, and Cys512–Cys561. A helical transmembrane segment spans residues 590–610; that stretch reads GLIAVVVIGVVIAALIVAAKY. Topologically, residues 611 to 678 are cytoplasmic; it reads YFLRKAKAKQ…EPHQENGRLP (68 aa). The interval 634–653 is disordered; it reads NSNSEKVSEPSVETNSHYDS. The ITIM motif signature appears at 658 to 663; the sequence is VEYTEV. A Phosphotyrosine; by FER modification is found at Tyr660.

Trans-homodimer (via Ig-like C2-type 1 and Ig-like C2-type 2 domains); trans-homodimerization is required for cell-cell interaction. Forms a complex with BDKRB2 and GNAQ. Interacts with BDKRB2 and GNAQ. Interacts with PTPN11. Interacts with FER. Interacts with CD177; the interaction is Ca(2+)-dependent; the interaction is direct. Phosphorylated on Ser and Tyr residues after cellular activation. In endothelial cells Fyn mediates mechanical-force (stretch or pull) induced tyrosine phosphorylation. Phosphorylated on tyrosine residues by FER and FES in response to FCER1 activation. Post-translationally, palmitoylation by ZDHHC21 is necessary for cell surface expression in endothelial cells and enrichment in membrane rafts.

The protein localises to the cell membrane. Its subcellular location is the membrane raft. It localises to the cell junction. In terms of biological role, cell adhesion molecule which is required for leukocyte transendothelial migration (TEM) under most inflammatory conditions. Tyr-660 plays a critical role in TEM and is required for efficient trafficking of PECAM1 to and from the lateral border recycling compartment (LBRC) and is also essential for the LBRC membrane to be targeted around migrating leukocytes. Trans-homophilic interaction may play a role in endothelial cell-cell adhesion via cell junctions. Heterophilic interaction with CD177 plays a role in transendothelial migration of neutrophils. Homophilic ligation of PECAM1 prevents macrophage-mediated phagocytosis of neighboring viable leukocytes by transmitting a detachment signal. Promotes macrophage-mediated phagocytosis of apoptotic leukocytes by tethering them to the phagocytic cells; PECAM1-mediated detachment signal appears to be disabled in apoptotic leukocytes. Modulates bradykinin receptor BDKRB2 activation. Regulates bradykinin- and hyperosmotic shock-induced ERK1/2 activation in endothelial cells. Induces susceptibility to atherosclerosis. The protein is Platelet endothelial cell adhesion molecule (Pecam1) of Rattus norvegicus (Rat).